A 389-amino-acid polypeptide reads, in one-letter code: Phospho-N-acetylmuramoyl-pentapeptide-transferase (389 aa).

10 helical membrane-spanning segments follow: residues 25 to 45 (RAVM…PWVI), 73 to 93 (TMGG…WADL), 97 to 117 (FIWI…VDDY), 135 to 155 (FWQT…VSEI), 190 to 210 (VSYP…IVGS), 222 to 242 (GLVI…AYVM), 258 to 278 (GAGE…AFLW), 286 to 306 (VFMG…IAVI), 311 to 331 (IVLF…MMQV), and 366 to 386 (QVVV…LSSL).

Belongs to the glycosyltransferase 4 family. MraY subfamily. It depends on Mg(2+) as a cofactor.

The protein resides in the cell inner membrane. The catalysed reaction is UDP-N-acetyl-alpha-D-muramoyl-L-alanyl-gamma-D-glutamyl-meso-2,6-diaminopimeloyl-D-alanyl-D-alanine + di-trans,octa-cis-undecaprenyl phosphate = di-trans,octa-cis-undecaprenyl diphospho-N-acetyl-alpha-D-muramoyl-L-alanyl-D-glutamyl-meso-2,6-diaminopimeloyl-D-alanyl-D-alanine + UMP. The protein operates within cell wall biogenesis; peptidoglycan biosynthesis. Its function is as follows. Catalyzes the initial step of the lipid cycle reactions in the biosynthesis of the cell wall peptidoglycan: transfers peptidoglycan precursor phospho-MurNAc-pentapeptide from UDP-MurNAc-pentapeptide onto the lipid carrier undecaprenyl phosphate, yielding undecaprenyl-pyrophosphoryl-MurNAc-pentapeptide, known as lipid I. This Polynucleobacter asymbioticus (strain DSM 18221 / CIP 109841 / QLW-P1DMWA-1) (Polynucleobacter necessarius subsp. asymbioticus) protein is Phospho-N-acetylmuramoyl-pentapeptide-transferase.